The sequence spans 468 residues: 3-isopropylmalate dehydratase large subunit (468 aa).

The [4Fe-4S] cluster site is built by C349, C409, and C412.

It belongs to the aconitase/IPM isomerase family. LeuC type 1 subfamily. Heterodimer of LeuC and LeuD. The cofactor is [4Fe-4S] cluster.

The enzyme catalyses (2R,3S)-3-isopropylmalate = (2S)-2-isopropylmalate. Its pathway is amino-acid biosynthesis; L-leucine biosynthesis; L-leucine from 3-methyl-2-oxobutanoate: step 2/4. Catalyzes the isomerization between 2-isopropylmalate and 3-isopropylmalate, via the formation of 2-isopropylmaleate. This chain is 3-isopropylmalate dehydratase large subunit, found in Shewanella baltica (strain OS223).